We begin with the raw amino-acid sequence, 566 residues long: Cyclin G (566 aa).

The region spanning 285–368 is the Cyclin N-terminal domain; sequence MWYELPSDVL…VIANKLGVQM (84 aa).

The protein belongs to the cyclin family. Cyclin G subfamily. Interacts with corto. Interacts with the cyclin-dependent kinases Cdk2 and Cdk4. Interacts with Brca2 and Rad9. Interacts with polycomb protein Asx. Interacts with protein phosphatase 2A subunit wdb.

It is found in the chromosome. Cyclin with roles in multiple processes including transcription, meiotic recombination repair, cell cycle regulation, and promotion of normal growth and metabolism. Binds to the promoter region of the homeobox gene Abd-B and is involved in maintaining Abd-B expression in the pupal epithelium. Involved in the transcriptional repression of the homeotic genes Scr and Ubx. Plays a role in meiotic recombination repair of DNA double-strand breaks which ensures efficient translation of grk and promotes grk activity in the oocyte, leading to oocyte dorso-ventral axis formation following secretion of grk from the oocyte and its binding to Egfr in the directly overlying follicle cells. Negatively regulates the binding of serine/threonine-protein kinase Akt1 to the protein phosphatase 2A subunit wdb, promoting normal growth and metabolism. Required for the formation of bilateral symmetry. Negatively regulates cell cycle progression by preventing G1 to S transition and retarding S-phase progression. This Drosophila melanogaster (Fruit fly) protein is Cyclin G.